The following is a 352-amino-acid chain: O(6)-methylguanine-induced apoptosis 2 (352 aa).

STPGR repeat units lie at residues 80-90 (NPGPGAYNVAR), 124-139 (PAPNAYNVYEEFFSKK), 165-171 (PAPNQYS), 205-235 (GPSPCHYKINDSLVKESTKVPVSCFKSKTSR), 244-263 (NPGPASYDPYKSSESEKKII), 286-295 (PGPGHYDIVD), and 325-335 (LPGPGAYHPEI).

It belongs to the STPG1 family.

The protein resides in the cytoplasm. The protein localises to the nucleus. Its function is as follows. May positively contribute to the induction of apoptosis triggered by O(6)-methylguanine. This Xenopus laevis (African clawed frog) protein is O(6)-methylguanine-induced apoptosis 2 (stpg1).